The following is a 37-amino-acid chain: Large ribosomal subunit protein bL36 (37 aa).

Belongs to the bacterial ribosomal protein bL36 family.

The polypeptide is Large ribosomal subunit protein bL36 (Psychromonas ingrahamii (strain DSM 17664 / CCUG 51855 / 37)).